The chain runs to 64 residues: Large ribosomal subunit protein bL35 (64 aa).

Basic residues predominate over residues 1–15 (MPKNKTHSGASKRFR). The disordered stretch occupies residues 1 to 20 (MPKNKTHSGASKRFRVTGSG).

Belongs to the bacterial ribosomal protein bL35 family.

This Nocardioides sp. (strain ATCC BAA-499 / JS614) protein is Large ribosomal subunit protein bL35.